Consider the following 103-residue polypeptide: Small ribosomal subunit protein uS10 (103 aa).

Belongs to the universal ribosomal protein uS10 family. In terms of assembly, part of the 30S ribosomal subunit.

Its function is as follows. Involved in the binding of tRNA to the ribosomes. This is Small ribosomal subunit protein uS10 from Nitratiruptor sp. (strain SB155-2).